The following is a 272-amino-acid chain: Hematopoietically-expressed homeobox protein hhex (272 aa).

A DNA-binding region (homeobox) is located at residues 137–196 (RKGGQVRFSNDQTIELEKKFETQKYLSPPERKRLAKMLQLSERQVKTWFQNRRAKWRRLK). The disordered stretch occupies residues 222 to 272 (CLSAEQKSRESSLDDPTSSPTSQGNLDSEVSDDSDQEVDIEGDKGYYNCAH). Residues 250–261 (EVSDDSDQEVDI) are compositionally biased toward acidic residues.

In terms of tissue distribution, first expressed in the dorsal endomesoderm of the gastrula stage embryo. The dorsal endomesoderm contributes to forming the embryonic liver, and expression continues in the liver throughout development. Also expressed in precursors of the developing thyroid gland, and beginning at the tailbud stage, expressed in the ventral region of the head. Also transiently expressed in the endothelial layer of developing vascular tissues of the embryo, beginning at the tailbud stages.

The protein localises to the nucleus. Recognizes the DNA sequence 5'-ATTAA-3'. Transcriptional repressor. Regulates the differentiation of both endothelial and blood cells. Probably plays a role in the proliferation of vascular endothelial cells during blood vessel development. Establishes anterior identity at two levels; acts early to enhance canonical wnt-signaling by repressing expression of tle4, and acts later to inhibit nodal-signaling by directly targeting nodal/nr1 and nodal2/nr2. May play a role in liver development. Induces heart development. This is Hematopoietically-expressed homeobox protein hhex from Xenopus laevis (African clawed frog).